The chain runs to 235 residues: UPF0173 metal-dependent hydrolase Oant_3663 (235 aa).

It belongs to the UPF0173 family.

The sequence is that of UPF0173 metal-dependent hydrolase Oant_3663 from Brucella anthropi (strain ATCC 49188 / DSM 6882 / CCUG 24695 / JCM 21032 / LMG 3331 / NBRC 15819 / NCTC 12168 / Alc 37) (Ochrobactrum anthropi).